A 615-amino-acid chain; its full sequence is Zinc finger protein 653 (615 aa).

3 disordered regions span residues 1–46 (MAER…ARRR), 93–115 (RSGRHGKPWEQVPKKPKRKKRRR), and 174–235 (PLSD…SGLI). Over residues 7–25 (EPGAEAEAGAGGEAAAEEG) the composition is skewed to low complexity. The segment covering 106-115 (KKPKRKKRRR) has biased composition (basic residues). Composition is skewed to low complexity over residues 192–203 (GSSDSSSSGSSS) and 212–232 (QPAKASAAAAALTPASPTGSS). 5 consecutive C2H2-type zinc fingers follow at residues 467-492 (FHCPYEGCSQVYVALSSFQNHVNLVH), 498-522 (KVCPHPGCGKKFYLSNHLRRHMIIH), 528-550 (FTCETCGKSFKRKNHLEVHRRTH), 556-578 (LQCEICGYQCRQRASLNWHMKKH), and 586-609 (FTCDRCGKRFEKLDSVKFHTLKSH).

It belongs to the krueppel C2H2-type zinc-finger protein family. Interacts with NR5A1. As to expression, highly expressed in testis and spleen. Moderately expressed in lung, adrenal gland, uterus, and ovary. Very low expression in pancreas, heart, skeletal muscle, adipose tissue, kidney, and liver.

The protein localises to the nucleus. Functionally, transcriptional repressor. May repress NR5A1, PPARG, NR1H3, NR4A2, ESR1 and NR3C1 transcriptional activity. This Mus musculus (Mouse) protein is Zinc finger protein 653 (Znf653).